The chain runs to 91 residues: Parbolysin P6 (91 aa).

3 disulfide bridges follow: Cys-16–Cys-37, Cys-22–Cys-33, and Cys-47–Cys-60.

It belongs to the worm cytolysin family. As to expression, localized within the skin and proboscis and are most readily isolated from body mucus secretions.

It is found in the secreted. Cytolysin that shows hemolytic activity (on bovine erythrocytes, HC(50)=5.75 mg/ml). This hemolytic activity is completely inhibited by small unilamelar vesicles composed of PC/PG, PC/PI and PC/PS in 1:1 molar ratios (with at least 100 mg/ml concentration). In Parborlasia corrugatus (Antarctic nemertean worm), this protein is Parbolysin P6.